A 549-amino-acid polypeptide reads, in one-letter code: Glucose-6-phosphate isomerase (549 aa).

Glu-355 acts as the Proton donor in catalysis. Catalysis depends on residues His-387 and Lys-515.

The protein belongs to the GPI family.

It localises to the cytoplasm. The enzyme catalyses alpha-D-glucose 6-phosphate = beta-D-fructose 6-phosphate. The protein operates within carbohydrate biosynthesis; gluconeogenesis. Its pathway is carbohydrate degradation; glycolysis; D-glyceraldehyde 3-phosphate and glycerone phosphate from D-glucose: step 2/4. In terms of biological role, catalyzes the reversible isomerization of glucose-6-phosphate to fructose-6-phosphate. In Haemophilus influenzae (strain PittEE), this protein is Glucose-6-phosphate isomerase.